The sequence spans 142 residues: Sec-independent protein translocase protein TatB (142 aa).

The chain crosses the membrane as a helical span at residues 1–21; the sequence is MFDFGFSELVVIGVVMLIVVG. Residues 99–142 are disordered; it reads AAPPDNTTSAESQAAADPAAVDSSQQLELRLDTTPKQVVGSDKA. Low complexity predominate over residues 107-124; it reads SAESQAAADPAAVDSSQQ.

This sequence belongs to the TatB family. In terms of assembly, the Tat system comprises two distinct complexes: a TatABC complex, containing multiple copies of TatA, TatB and TatC subunits, and a separate TatA complex, containing only TatA subunits. Substrates initially bind to the TatABC complex, which probably triggers association of the separate TatA complex to form the active translocon.

The protein resides in the cell inner membrane. Part of the twin-arginine translocation (Tat) system that transports large folded proteins containing a characteristic twin-arginine motif in their signal peptide across membranes. Together with TatC, TatB is part of a receptor directly interacting with Tat signal peptides. TatB may form an oligomeric binding site that transiently accommodates folded Tat precursor proteins before their translocation. This Azoarcus sp. (strain BH72) protein is Sec-independent protein translocase protein TatB.